Here is a 232-residue protein sequence, read N- to C-terminus: Clarin-2 (232 aa).

4 helical membrane-spanning segments follow: residues 8-28 (VWYG…IVAL), 101-121 (ILLL…FAIL), 139-159 (LWNV…MAAV), and 188-208 (SFWI…VVAI).

It belongs to the clarin family. As to expression, detected in inner ear, particularly in hair bundles of auditory hair cells and is enriched in apical stereocilia. Detected in eye, but not in brain or muscle.

Its subcellular location is the cell projection. It localises to the stereocilium membrane. Functionally, plays a key role to hearing function. Required for normal organization and maintenance of the stereocilia bundle and for mechano-electrical transduction. In Mus musculus (Mouse), this protein is Clarin-2.